We begin with the raw amino-acid sequence, 199 residues long: Recombination protein RecR (199 aa).

The C4-type zinc finger occupies 56-71 (CAICGNVSEKETCGIC). The region spanning 79–174 (ATICVVEEAK…RVTRLASGLP (96 aa)) is the Toprim domain.

It belongs to the RecR family.

Functionally, may play a role in DNA repair. It seems to be involved in an RecBC-independent recombinational process of DNA repair. It may act with RecF and RecO. This is Recombination protein RecR from Clavibacter michiganensis subsp. michiganensis (strain NCPPB 382).